Consider the following 111-residue polypeptide: Iron-sulfur cluster assembly protein CyaY (111 aa).

The protein belongs to the frataxin family.

Functionally, involved in iron-sulfur (Fe-S) cluster assembly. May act as a regulator of Fe-S biogenesis. This chain is Iron-sulfur cluster assembly protein CyaY, found in Cupriavidus metallidurans (strain ATCC 43123 / DSM 2839 / NBRC 102507 / CH34) (Ralstonia metallidurans).